The chain runs to 299 residues: Myozenin-1 (299 aa).

The tract at residues 1 to 34 (MPLSGTPAPNKKRKSSKLIMELTGGGQESSGLNL) is disordered. Position 82 is a phosphoserine (Ser-82). Residues 102–174 (GQGFSYSKSN…TGSGDQAGGE (73 aa)) form a disordered region. Composition is skewed to gly residues over residues 112 to 125 (GRGG…GSAG) and 137 to 173 (SGSG…QAGG).

This sequence belongs to the myozenin family. In terms of assembly, interacts with ACTN2, ACTN3, FLNA, FLNB, FLNC, LDB3, PPP3CA and TCAP. Interacts via its C-terminal region with MYOT. In terms of tissue distribution, expressed primarily in skeletal muscle. Detected at lower levels in heart, prostate and pancreas.

The protein localises to the nucleus. It localises to the cell projection. The protein resides in the pseudopodium. Myozenins may serve as intracellular binding proteins involved in linking Z-disk proteins such as alpha-actinin, gamma-filamin, TCAP/telethonin, LDB3/ZASP and localizing calcineurin signaling to the sarcomere. Plays an important role in the modulation of calcineurin signaling. May play a role in myofibrillogenesis. The protein is Myozenin-1 of Homo sapiens (Human).